The primary structure comprises 335 residues: 2-acylglycerol O-acyltransferase 1 (335 aa).

2 consecutive transmembrane segments (helical) span residues 24-44 (WLLS…FLII) and 104-124 (YIFG…NFCT). Asn-125 and Asn-180 each carry an N-linked (GlcNAc...) asparagine glycan.

Belongs to the diacylglycerol acyltransferase family.

The protein localises to the endoplasmic reticulum membrane. The catalysed reaction is a 2-acylglycerol + an acyl-CoA = a 1,2-diacylglycerol + CoA. The enzyme catalyses 2-(9Z-octadecenoyl)-glycerol + butanoyl-CoA = 1-butanoyl-2-(9Z-octadecenoyl)-glycerol + CoA. It catalyses the reaction 2-(9Z-octadecenoyl)-glycerol + octanoyl-CoA = 1-octanoyl-2-(9Z-octadecenoyl)-glycerol + CoA. It carries out the reaction 2-(9Z-octadecenoyl)-glycerol + dodecanoyl-CoA = 1-dodecanoyl-2-(9Z-octadecenoyl)-glycerol + CoA. The catalysed reaction is 2-(9Z-octadecenoyl)-glycerol + tetradecanoyl-CoA = 1-tetradecanoyl-2-(9Z-octadecenoyl)-glycerol + CoA. The enzyme catalyses 2-(9Z-octadecenoyl)-glycerol + hexadecanoyl-CoA = 1-hexadecanoyl-2-(9Z-octadecenoyl)-glycerol + CoA. It catalyses the reaction 2-(9Z-octadecenoyl)-glycerol + octadecanoyl-CoA = 1-octadecanoyl-2-(9Z-octadecenoyl)-glycerol + CoA. It carries out the reaction eicosanoyl-CoA + 2-(9Z-octadecenoyl)-glycerol = 1-eicosanoyl-2-(9Z-octadecenoyl)-glycerol + CoA. The catalysed reaction is 2-(9Z-octadecenoyl)-glycerol + (9Z)-octadecenoyl-CoA = 1,2-di-(9Z-octadecenoyl)-glycerol + CoA. The enzyme catalyses 2-(9Z-octadecenoyl)-glycerol + (9Z,12Z)-octadecadienoyl-CoA = 1-(9Z,12Z-octadecadienoyl)-2-(9Z-octadecenoyl)-glycerol + CoA. It catalyses the reaction 2-(9Z-octadecenoyl)-glycerol + (5Z,8Z,11Z,14Z)-eicosatetraenoyl-CoA = 1-(5Z,8Z,11Z,14Z-eicosatetraenoyl)-2-(9Z-octadecenoyl)-glycerol + CoA. It carries out the reaction a 2-acylglycerol + an acyl-CoA = a 1,2-diacyl-sn-glycerol + CoA. The catalysed reaction is a 2-acylglycerol + an acyl-CoA = a 2,3-diacyl-sn-glycerol + CoA. The enzyme catalyses a 1-acylglycerol + an acyl-CoA = a 1,2-diacylglycerol + CoA. It catalyses the reaction 1-dodecanoylglycerol + (9Z)-octadecenoyl-CoA = 1-dodecanoyl-2-(9Z-octadecenoyl)-glycerol + CoA. It carries out the reaction 1-tetradecanoylglycerol + (9Z)-octadecenoyl-CoA = 1-tetradecanoyl-2-(9Z-octadecenoyl)-glycerol + CoA. The catalysed reaction is 1-hexadecanoylglycerol + (9Z)-octadecenoyl-CoA = 1-hexadecanoyl-2-(9Z-octadecenoyl)-glycerol + CoA. The enzyme catalyses 1-(9Z-octadecenoyl)-glycerol + (9Z)-octadecenoyl-CoA = 1,2-di-(9Z-octadecenoyl)-glycerol + CoA. It catalyses the reaction 1-(9Z,12Z-octadecadienoyl)-glycerol + (9Z)-octadecenoyl-CoA = 1-(9Z,12Z-octadecadienoyl)-2-(9Z-octadecenoyl)-glycerol + CoA. It carries out the reaction 1-(9Z,12Z,15Z-octadecatrienoyl)-glycerol + (9Z)-octadecenoyl-CoA = 1-(9Z,12Z,15Z-octadecatrienoyl)-2-(9Z-octadecenoyl)-glycerol + CoA. The catalysed reaction is 1-(5Z,8Z,11Z,14Z-eicosatetraenoyl)-glycerol + (9Z)-octadecenoyl-CoA = 1-(5Z,8Z,11Z,14Z-eicosatetraenoyl)-2-(9Z-octadecenoyl)-glycerol + CoA. The enzyme catalyses a 1-acylglycerol + an acyl-CoA = a 1,3-diacylglycerol + CoA. It catalyses the reaction 1-dodecanoylglycerol + (9Z)-octadecenoyl-CoA = 1-dodecanoyl-3-(9Z-octadecenoyl)-glycerol + CoA. It carries out the reaction 1-hexadecanoylglycerol + (9Z)-octadecenoyl-CoA = 1-(9Z-octadecenoyl)-3-hexadecanoylglycerol + CoA. The catalysed reaction is 1-octadecanoylglycerol + (9Z)-octadecenoyl-CoA = 1-octadecanoyl-3-(9Z-octadecenoyl)-glycerol + CoA. The enzyme catalyses 1-(9Z-octadecenoyl)-sn-glycerol + (9Z)-octadecenoyl-CoA = 1,3-di-(9Z-octadecenoyl)-glycerol + CoA. It catalyses the reaction 1-(9Z,12Z-octadecadienoyl)-glycerol + (9Z)-octadecenoyl-CoA = 1-(9Z-octadecenoyl)-3-(9Z,12Z-octadecadienoyl)-glycerol + CoA. It carries out the reaction 1-(9Z,12Z,15Z-octadecatrienoyl)-glycerol + (9Z)-octadecenoyl-CoA = 1-(9Z,12Z,15Z-octadecatrienoyl)-3-(9Z-octadecenoyl)-glycerol + CoA. The catalysed reaction is a 1-acyl-sn-glycerol + an acyl-CoA = a 1,3-diacyl-sn-glycerol + CoA. The enzyme catalyses a 3-acyl-sn-glycerol + an acyl-CoA = a 1,3-diacyl-sn-glycerol + CoA. It catalyses the reaction 3-octadecanoyl-sn-glycerol + (9Z)-octadecenoyl-CoA = 1-(9Z-octadecenoyl)-3-octadecanoyl-sn-glycerol + CoA. The protein operates within glycerolipid metabolism; triacylglycerol biosynthesis. Its function is as follows. Involved in glycerolipid synthesis and lipid metabolism. Catalyzes the formation of diacylglycerol, the precursor of triacylglycerol, by transferring the acyl chain of a fatty acyl-CoA to a monoacylglycerol, mainly at the sn-1 or sn-3 positions. It uses both sn-2-monoacylglycerol (2-acylglycerol) and sn-1-monoacylglycerol (1-acyl-sn-glycerol) equally well as substrates, and uses sn-3-monoacylglycerol (3-acyl-sn-glycerol) with lower efficiency. Probably not involved in absorption of dietary fat in the small intestine. This is 2-acylglycerol O-acyltransferase 1 (MOGAT1) from Bos taurus (Bovine).